The following is a 591-amino-acid chain: Lipoprotein LpqB (591 aa).

Residues 1-20 (MTLRPSRRAVLSAAAVLLTG) form the signal peptide. C21 carries the N-palmitoyl cysteine lipid modification. The S-diacylglycerol cysteine moiety is linked to residue C21.

It belongs to the LpqB lipoprotein family.

It is found in the cell membrane. This chain is Lipoprotein LpqB, found in Cutibacterium acnes (strain DSM 16379 / KPA171202) (Propionibacterium acnes).